The sequence spans 118 residues: Myotrophin (118 aa).

ANK repeat units follow at residues 1 to 30 (MSDK…DVNR), 34 to 65 (GGRK…NAPD), and 67 to 98 (HNIT…TVKG).

Belongs to the myotrophin family.

The protein localises to the cytoplasm. Its subcellular location is the nucleus. It is found in the perinuclear region. Functionally, regulates NF-kappa-B transcription factor activity. Promotes growth of cardiomyocytes, but not cardiomyocyte proliferation. Promotes cardiac muscle hypertrophy. Plays a role in the regulation of the growth of actin filaments. Inhibits the activity of the F-actin-capping protein complex. In Gallus gallus (Chicken), this protein is Myotrophin (MTPN).